The sequence spans 485 residues: Glycogen synthase (485 aa).

Lys-17 serves as a coordination point for ADP-alpha-D-glucose.

This sequence belongs to the glycosyltransferase 1 family. Bacterial/plant glycogen synthase subfamily.

It carries out the reaction [(1-&gt;4)-alpha-D-glucosyl](n) + ADP-alpha-D-glucose = [(1-&gt;4)-alpha-D-glucosyl](n+1) + ADP + H(+). The protein operates within glycan biosynthesis; glycogen biosynthesis. Functionally, synthesizes alpha-1,4-glucan chains using ADP-glucose. The chain is Glycogen synthase from Novosphingobium aromaticivorans (strain ATCC 700278 / DSM 12444 / CCUG 56034 / CIP 105152 / NBRC 16084 / F199).